The chain runs to 222 residues: 6,7-dimethyl-8-ribityllumazine synthase, chloroplastic (222 aa).

The transit peptide at 1–66 (MASFAASQTC…NRASFVVTNA (66 aa)) directs the protein to the chloroplast. Residues phenylalanine 89, 122 to 124 (AYE), and 146 to 148 (AVV) each bind 5-amino-6-(D-ribitylamino)uracil. 151–152 (DT) is a binding site for (2S)-2-hydroxy-3-oxobutyl phosphate. Histidine 154 acts as the Proton donor in catalysis. Phenylalanine 179 contacts 5-amino-6-(D-ribitylamino)uracil. A (2S)-2-hydroxy-3-oxobutyl phosphate-binding site is contributed by arginine 193.

The protein belongs to the DMRL synthase family. As to quaternary structure, oligomer forming an icosahedral capsid.

The protein resides in the plastid. The protein localises to the chloroplast. The enzyme catalyses (2S)-2-hydroxy-3-oxobutyl phosphate + 5-amino-6-(D-ribitylamino)uracil = 6,7-dimethyl-8-(1-D-ribityl)lumazine + phosphate + 2 H2O + H(+). It functions in the pathway cofactor biosynthesis; riboflavin biosynthesis; riboflavin from 2-hydroxy-3-oxobutyl phosphate and 5-amino-6-(D-ribitylamino)uracil: step 1/2. Its function is as follows. Catalyzes the formation of 6,7-dimethyl-8-ribityllumazine by condensation of 5-amino-6-(D-ribitylamino)uracil with 3,4-dihydroxy-2-butanone 4-phosphate. This is the penultimate step in the biosynthesis of riboflavin. This is 6,7-dimethyl-8-ribityllumazine synthase, chloroplastic from Spinacia oleracea (Spinach).